The chain runs to 387 residues: Mannitol-1-phosphate 5-dehydrogenase (387 aa).

3–14 (AVHFGAGNIGRG) contributes to the NAD(+) binding site.

The protein belongs to the mannitol dehydrogenase family.

It carries out the reaction D-mannitol 1-phosphate + NAD(+) = beta-D-fructose 6-phosphate + NADH + H(+). This chain is Mannitol-1-phosphate 5-dehydrogenase, found in Pseudarthrobacter chlorophenolicus (strain ATCC 700700 / DSM 12829 / CIP 107037 / JCM 12360 / KCTC 9906 / NCIMB 13794 / A6) (Arthrobacter chlorophenolicus).